A 127-amino-acid chain; its full sequence is Small ribosomal subunit protein uS17m (127 aa).

The protein belongs to the universal ribosomal protein uS17 family.

The protein localises to the mitochondrion. This is Small ribosomal subunit protein uS17m (mrps17) from Dictyostelium discoideum (Social amoeba).